The chain runs to 558 residues: Protein OS-9 homolog (558 aa).

A signal peptide spans 1–17 (MLLKSLALIASSSLAAT). N-linked (GlcNAc...) asparagine glycosylation occurs at Asn68. Residues 111 to 237 (GDCLFYEQGF…QVGTPRLCKD (127 aa)) enclose the MRH domain. Residues Cys113 and Cys126 are joined by a disulfide bond. The a mannooligosaccharide derivative site is built by Gln133, Arg197, Glu219, and Tyr225. Intrachain disulfides connect Cys190/Cys223 and Cys205/Cys235. Disordered stretches follow at residues 435–508 (SKKL…DEDE) and 539–558 (KDLA…GLSD). The span at 441-466 (KKEAASTKREEAKKQVEASVEEKAVD) shows a compositional bias: basic and acidic residues. The span at 474–492 (DTVTSTQTFFRTQTLSTAE) shows a compositional bias: polar residues. Residues 543–558 (DKEDDDDDYEDYGLSD) show a composition bias toward acidic residues.

Belongs to the OS-9 family. In terms of assembly, interacts with missfolded ER lumenal proteins.

The protein resides in the endoplasmic reticulum membrane. Its function is as follows. Lectin involved in the quality control of the secretory pathway. As a member of the endoplasmic reticulum-associated degradation lumenal (ERAD-L) surveillance system, targets misfolded endoplasmic reticulum lumenal glycoproteins for degradation. This Yarrowia lipolytica (strain CLIB 122 / E 150) (Yeast) protein is Protein OS-9 homolog (YOS9).